The following is a 309-amino-acid chain: Homoserine kinase (309 aa).

Residue Pro-91–Cys-101 coordinates ATP.

This sequence belongs to the GHMP kinase family. Homoserine kinase subfamily.

The protein localises to the cytoplasm. The catalysed reaction is L-homoserine + ATP = O-phospho-L-homoserine + ADP + H(+). The protein operates within amino-acid biosynthesis; L-threonine biosynthesis; L-threonine from L-aspartate: step 4/5. Its function is as follows. Catalyzes the ATP-dependent phosphorylation of L-homoserine to L-homoserine phosphate. The protein is Homoserine kinase of Yersinia enterocolitica serotype O:8 / biotype 1B (strain NCTC 13174 / 8081).